We begin with the raw amino-acid sequence, 497 residues long: Cytochrome P450 2D6 (497 aa).

Aspartate 301 lines the substrate pocket. Residue cysteine 443 coordinates heme.

Belongs to the cytochrome P450 family. Requires heme as cofactor.

It is found in the endoplasmic reticulum membrane. Its subcellular location is the microsome membrane. The enzyme catalyses (5Z,8Z,11Z,14Z)-eicosatetraenoate + reduced [NADPH--hemoprotein reductase] + O2 = (8R,9S)-epoxy-(5Z,11Z,14Z)-eicosatrienoate + oxidized [NADPH--hemoprotein reductase] + H2O + H(+). It carries out the reaction (5Z,8Z,11Z,14Z)-eicosatetraenoate + reduced [NADPH--hemoprotein reductase] + O2 = (11R,12S)-epoxy-(5Z,8Z,14Z)-eicosatrienoate + oxidized [NADPH--hemoprotein reductase] + H2O + H(+). The catalysed reaction is (5Z,8Z,11Z,14Z)-eicosatetraenoate + reduced [NADPH--hemoprotein reductase] + O2 = (14S,15R)-epoxy-(5Z,8Z,11Z)-eicosatrienoate + oxidized [NADPH--hemoprotein reductase] + H2O + H(+). It catalyses the reaction N-(5Z,8Z,11Z,14Z-eicosatetraenoyl)-ethanolamine + reduced [NADPH--hemoprotein reductase] + O2 = N-(8,9-epoxy-5Z,11Z,14Z-eicosatrienoyl)-ethanolamine + oxidized [NADPH--hemoprotein reductase] + H2O + H(+). The enzyme catalyses N-(5Z,8Z,11Z,14Z-eicosatetraenoyl)-ethanolamine + reduced [NADPH--hemoprotein reductase] + O2 = N-(11,12-epoxy-5Z,8Z,14Z-eicosatrienoyl)-ethanolamine + oxidized [NADPH--hemoprotein reductase] + H2O + H(+). It carries out the reaction N-(5Z,8Z,11Z,14Z-eicosatetraenoyl)-ethanolamine + reduced [NADPH--hemoprotein reductase] + O2 = N-(14,15-epoxy-5Z,8Z,11Z-eicosatrienoyl)-ethanolamine + oxidized [NADPH--hemoprotein reductase] + H2O + H(+). The catalysed reaction is N-(5Z,8Z,11Z,14Z-eicosatetraenoyl)-ethanolamine + reduced [NADPH--hemoprotein reductase] + O2 = N-(20-hydroxy-5Z,8Z,11Z,14Z-eicosatetraenoyl)-ethanolamine + oxidized [NADPH--hemoprotein reductase] + H2O + H(+). It catalyses the reaction (5Z,8Z,11Z,14Z,17Z)-eicosapentaenoate + reduced [NADPH--hemoprotein reductase] + O2 = (17S,18R)-epoxy-(5Z,8Z,11Z,14Z)-eicosatetraenoate + oxidized [NADPH--hemoprotein reductase] + H2O + H(+). The enzyme catalyses (4Z,7Z,10Z,13Z,16Z,19Z)-docosahexaenoate + reduced [NADPH--hemoprotein reductase] + O2 = (19R,20S)-epoxy-(4Z,7Z,10Z,13Z,16Z)-docosapentaenoate + oxidized [NADPH--hemoprotein reductase] + H2O + H(+). It carries out the reaction (4Z,7Z,10Z,13Z,16Z,19Z)-docosahexaenoate + reduced [NADPH--hemoprotein reductase] + O2 = (19S,20R)-epoxy-(4Z,7Z,10Z,13Z,16Z)-docosapentaenoate + oxidized [NADPH--hemoprotein reductase] + H2O + H(+). The catalysed reaction is cholesterol + reduced [NADPH--hemoprotein reductase] + O2 = 25-hydroxycholesterol + oxidized [NADPH--hemoprotein reductase] + H2O + H(+). It catalyses the reaction all-trans-retinol + reduced [NADPH--hemoprotein reductase] + O2 = all-trans-retinal + oxidized [NADPH--hemoprotein reductase] + 2 H2O + H(+). It participates in cofactor metabolism; retinol metabolism. Its pathway is lipid metabolism; fatty acid metabolism. The protein operates within steroid metabolism; cholesterol metabolism. Its function is as follows. A cytochrome P450 monooxygenase involved in the metabolism of fatty acids, steroids and retinoids. Mechanistically, uses molecular oxygen inserting one oxygen atom into a substrate, and reducing the second into a water molecule, with two electrons provided by NADPH via cytochrome P450 reductase (NADPH--hemoprotein reductase). Catalyzes the epoxidation of double bonds of polyunsaturated fatty acids (PUFA). Metabolizes endocannabinoid arachidonoylethanolamide (anandamide) to 20-hydroxyeicosatetraenoic acid ethanolamide (20-HETE-EA) and 8,9-, 11,12-, and 14,15-epoxyeicosatrienoic acid ethanolamides (EpETrE-EAs), potentially modulating endocannabinoid system signaling. Catalyzes the hydroxylation of carbon-hydrogen bonds. Metabolizes cholesterol toward 25-hydroxycholesterol, a physiological regulator of cellular cholesterol homeostasis. Catalyzes the oxidative transformations of all-trans retinol to all-trans retinal, a precursor for the active form all-trans-retinoic acid. Also involved in the oxidative metabolism of drugs such as antiarrhythmics, adrenoceptor antagonists, and tricyclic antidepressants. In Pan troglodytes (Chimpanzee), this protein is Cytochrome P450 2D6 (CYP2D6).